The sequence spans 247 residues: Fasciclin-like arabinogalactan protein 13 (247 aa).

An N-terminal signal peptide occupies residues 1–25; it reads MATTPLLLLLLTAVFLSTEITAQRA. The region spanning 34-179 is the FAS1 domain; that stretch reads PINITAILEK…LAVYVVDMVL (146 aa). N-linked (GlcNAc...) asparagine glycosylation is found at asparagine 36, asparagine 55, asparagine 68, asparagine 141, and asparagine 150. The interval 189–228 is disordered; that stretch reads KISPMAPPPKSKSPDVSDDSESSKKAAAPSESEKSGSGEM. Glycine 224 carries GPI-anchor amidated glycine lipidation. The propeptide at 225–247 is removed in mature form; that stretch reads SGEMNTGLGLGLGLVVLCLKFLL.

This sequence belongs to the fasciclin-like AGP family.

The protein resides in the cell membrane. May be a cell surface adhesion protein. This is Fasciclin-like arabinogalactan protein 13 (FLA13) from Arabidopsis thaliana (Mouse-ear cress).